The sequence spans 239 residues: Protein NtpR (239 aa).

The Glutamine amidotransferase type-1 domain occupies 12 to 239; the sequence is LIRATDTFQG…GLFDFFVQEF (228 aa). Cysteine 113 (nucleophile) is an active-site residue. Residues histidine 217 and glutamate 219 contribute to the active site.

This Enterococcus hirae (strain ATCC 9790 / DSM 20160 / JCM 8729 / LMG 6399 / NBRC 3181 / NCIMB 6459 / NCDO 1258 / NCTC 12367 / WDCM 00089 / R) protein is Protein NtpR (ntpR).